The chain runs to 215 residues: Sodium channel regulatory subunit beta-3 (215 aa).

A signal peptide spans 1 to 24 (MPAFNRLLPLASLVLIYWVRVCFP). An Ig-like C2-type domain is found at 25–138 (VCVEVPSETE…EAHRPFVKTT (114 aa)). Over 25–156 (VCVEVPSETE…EEAGEDFTSV (132 aa)) the chain is Extracellular. Intrachain disulfides connect Cys-26-Cys-48 and Cys-45-Cys-120. N-linked (GlcNAc...) asparagine glycans are attached at residues Asn-95, Asn-109, Asn-113, and Asn-121. Residues 157-178 (VSEIMMYILLVFLTLWLFIEMI) form a helical membrane-spanning segment. At 179-215 (YCYRKVSKAEEAAQENASDYLAIPSENKENSVVPVEE) the chain is on the cytoplasmic side.

Belongs to the sodium channel auxiliary subunit SCN3B (TC 8.A.17) family. In terms of assembly, a voltage-gated sodium (Nav) channel consists of an ion-conducting pore-forming alpha subunit functional on its own that is regulated by one or more beta subunits. Forms homodimers and homotrimers. SCN3B is non-covalently associated with alpha subunits and induces the formation of alpha subunit oligomers, including trimers. Interacts with SCN5A/Nav1.5; regulatory subunit of SCN5A/Nav1.5. Interacts with SCN7A/Nav2.1; probable regulatory subunit of SCN7A/Nav2.1. Interacts with SCN10A; regulatory subunit of SCN10A/Nav1.8. Interacts with NFASC; probably involved in targeting the sodium channels to the nodes of Ranvier. Intramolecular disulfide bonds favor the voltage-gated sodium channel oligomeric complex assembly. In terms of processing, N-glycosylated. In terms of tissue distribution, expressed broadly in neurons in the central and peripheral nervous systems, but not in glia and most non-neuronal cells. Weak detection in lung and adrenal gland.

Its subcellular location is the cell membrane. Regulatory subunit of multiple voltage-gated sodium (Nav) channels directly mediating the depolarization of excitable membranes. Navs, also called VGSCs (voltage-gated sodium channels) or VDSCs (voltage-dependent sodium channels), operate by switching between closed and open conformations depending on the voltage difference across the membrane. In the open conformation they allow Na(+) ions to selectively pass through the pore, along their electrochemical gradient. The influx of Na+ ions provokes membrane depolarization, initiating the propagation of electrical signals throughout cells and tissues. The accessory beta subunits participate in localization and functional modulation of the Nav channels. Voltage-gated sodium channels regulatory subunit that modulates channel gating kinetics. Modulates the activity of SCN2A/Nav1.2, causing a hyperpolarizing shift in the voltage-dependence of inactivation and increasing the fraction of channels operating in the fast gating mode. Also able to induce unique persistent SCN2A/Nav1.2-mediated sodium currents. Could modulate the activity of SCN10A/Nav1.8. The sequence is that of Sodium channel regulatory subunit beta-3 from Rattus norvegicus (Rat).